The primary structure comprises 356 residues: Protein RecA (356 aa).

ATP is bound at residue 68-75 (GQESSGKT).

The protein belongs to the RecA family.

The protein localises to the cytoplasm. Functionally, can catalyze the hydrolysis of ATP in the presence of single-stranded DNA, the ATP-dependent uptake of single-stranded DNA by duplex DNA, and the ATP-dependent hybridization of homologous single-stranded DNAs. It interacts with LexA causing its activation and leading to its autocatalytic cleavage. This Thermotoga maritima (strain ATCC 43589 / DSM 3109 / JCM 10099 / NBRC 100826 / MSB8) protein is Protein RecA.